Consider the following 147-residue polypeptide: NADH-quinone oxidoreductase subunit A (147 aa).

3 helical membrane-spanning segments follow: residues 16–36 (FAIF…GGWF), 68–88 (FYLV…LFAW), and 98–118 (VGFV…VYLV).

It belongs to the complex I subunit 3 family. As to quaternary structure, NDH-1 is composed of 13 different subunits. Subunits NuoA, H, J, K, L, M, N constitute the membrane sector of the complex.

Its subcellular location is the cell inner membrane. It catalyses the reaction a quinone + NADH + 5 H(+)(in) = a quinol + NAD(+) + 4 H(+)(out). In terms of biological role, NDH-1 shuttles electrons from NADH, via FMN and iron-sulfur (Fe-S) centers, to quinones in the respiratory chain. The immediate electron acceptor for the enzyme in this species is believed to be ubiquinone. Couples the redox reaction to proton translocation (for every two electrons transferred, four hydrogen ions are translocated across the cytoplasmic membrane), and thus conserves the redox energy in a proton gradient. The polypeptide is NADH-quinone oxidoreductase subunit A (Shigella boydii serotype 18 (strain CDC 3083-94 / BS512)).